The following is a 212-amino-acid chain: Glycerol-3-phosphate acyltransferase (212 aa).

The next 6 helical transmembrane spans lie at Ile6–Leu26, Leu56–His76, Leu92–Phe112, Leu122–Leu142, Ser150–Ala170, and Ser171–Trp191.

The protein belongs to the PlsY family. In terms of assembly, probably interacts with PlsX.

The protein localises to the cell inner membrane. It catalyses the reaction an acyl phosphate + sn-glycerol 3-phosphate = a 1-acyl-sn-glycero-3-phosphate + phosphate. The protein operates within lipid metabolism; phospholipid metabolism. Functionally, catalyzes the transfer of an acyl group from acyl-phosphate (acyl-PO(4)) to glycerol-3-phosphate (G3P) to form lysophosphatidic acid (LPA). This enzyme utilizes acyl-phosphate as fatty acyl donor, but not acyl-CoA or acyl-ACP. This chain is Glycerol-3-phosphate acyltransferase, found in Zymomonas mobilis subsp. mobilis (strain ATCC 31821 / ZM4 / CP4).